We begin with the raw amino-acid sequence, 67 residues long: Large ribosomal subunit protein bL32 (67 aa).

Basic residues predominate over residues 1–19; it reads MAVPKRKMSRANTRMRRSQ. Positions 1–22 are disordered; that stretch reads MAVPKRKMSRANTRMRRSQWKA.

The protein belongs to the bacterial ribosomal protein bL32 family.

The protein is Large ribosomal subunit protein bL32 of Kocuria rhizophila (strain ATCC 9341 / DSM 348 / NBRC 103217 / DC2201).